The chain runs to 360 residues: Photosystem II protein D1 2 (360 aa).

The next 3 membrane-spanning stretches (helical) occupy residues tyrosine 29–threonine 46, histidine 118–leucine 133, and tryptophan 142–alanine 156. Histidine 118 is a chlorophyll a binding site. Pheophytin a is bound at residue tyrosine 126. Residues aspartate 170 and glutamate 189 each coordinate [CaMn4O5] cluster. A helical membrane pass occupies residues phenylalanine 197 to leucine 218. Position 198 (histidine 198) interacts with chlorophyll a. Residues histidine 215 and serine 264–phenylalanine 265 contribute to the a quinone site. Histidine 215 lines the Fe cation pocket. Histidine 272 provides a ligand contact to Fe cation. A helical transmembrane segment spans residues phenylalanine 274 to leucine 288. [CaMn4O5] cluster contacts are provided by histidine 332, glutamate 333, aspartate 342, and alanine 344. The propeptide occupies alanine 345 to glycine 360.

The protein belongs to the reaction center PufL/M/PsbA/D family. In terms of assembly, PSII is composed of 1 copy each of membrane proteins PsbA, PsbB, PsbC, PsbD, PsbE, PsbF, PsbH, PsbI, PsbJ, PsbK, PsbL, PsbM, PsbT, PsbX, PsbY, PsbZ, Psb30/Ycf12, peripheral proteins PsbO, CyanoQ (PsbQ), PsbU, PsbV and a large number of cofactors. It forms dimeric complexes. The cofactor is The D1/D2 heterodimer binds P680, chlorophylls that are the primary electron donor of PSII, and subsequent electron acceptors. It shares a non-heme iron and each subunit binds pheophytin, quinone, additional chlorophylls, carotenoids and lipids. D1 provides most of the ligands for the Mn4-Ca-O5 cluster of the oxygen-evolving complex (OEC). There is also a Cl(-1) ion associated with D1 and D2, which is required for oxygen evolution. The PSII complex binds additional chlorophylls, carotenoids and specific lipids.. Post-translationally, tyr-161 forms a radical intermediate that is referred to as redox-active TyrZ, YZ or Y-Z. C-terminally processed by CtpA; processing is essential to allow assembly of the oxygen-evolving complex and thus photosynthetic growth.

The protein localises to the cellular thylakoid membrane. It carries out the reaction 2 a plastoquinone + 4 hnu + 2 H2O = 2 a plastoquinol + O2. In terms of biological role, photosystem II (PSII) is a light-driven water:plastoquinone oxidoreductase that uses light energy to abstract electrons from H(2)O, generating O(2) and a proton gradient subsequently used for ATP formation. It consists of a core antenna complex that captures photons, and an electron transfer chain that converts photonic excitation into a charge separation. The D1/D2 (PsbA/PsbD) reaction center heterodimer binds P680, the primary electron donor of PSII as well as several subsequent electron acceptors. The polypeptide is Photosystem II protein D1 2 (Trichormus variabilis (strain ATCC 29413 / PCC 7937) (Anabaena variabilis)).